We begin with the raw amino-acid sequence, 752 residues long: MAP/microtubule affinity-regulating kinase 4 (752 aa).

A disordered region spans residues 1-36 (MSSRTVLAPGNDRNSDTHGTLGSGRSSDKGPSWSSR). The region spanning 59-310 (YRLLRTIGKG…LEQIMKDKWI (252 aa)) is the Protein kinase domain. ATP is bound by residues 65-73 (IGKGNFAKV) and Lys88. The Proton acceptor role is filled by Asp181. Thr214 carries the phosphothreonine; by LKB1 modification. The region spanning 324–368 (EPEEDFGDTKRIEVMVGMGYTREEIKESLTSQKYNEVTATYLLLG) is the UBA domain. A disordered region spans residues 385-614 (ARVRAPSDTT…PAGRPRPTTN (230 aa)). Positions 391–406 (SDTTNGTSSSKGTSHS) are enriched in low complexity. Phosphoserine occurs at positions 423 and 543. Residues 544 to 553 (PSSHSLAPPS) show a composition bias toward low complexity. The region spanning 703-752 (AGGPEPLSHFEVEVCQLPRPGLRGVLFRRVAGTALAFRTLVTRISNDLEL) is the KA1 domain.

It belongs to the protein kinase superfamily. CAMK Ser/Thr protein kinase family. SNF1 subfamily. As to quaternary structure, interacts with MAPT/TAU. Interacts with gamma-tubulin. Interacts with ODF2. Interacts with USP9X. Interacts with YWHAQ. Interacts with NLRP3; promoting NLRP3 recruitment to microtubule organizing center (MTOC). Mg(2+) serves as cofactor. Post-translationally, ubiquitinated with 'Lys-29'- and 'Lys-33'-linked polyubiquitins which appear to impede LKB1-mediated phosphorylation. Deubiquitinated by USP9X. Phosphorylated at Thr-214 by STK11/LKB1 in complex with STE20-related adapter-alpha (STRADA) pseudo kinase and CAB39. Phosphorylated throughout the cell cycle. Ubiquitous. Isoform 2 is brain-specific. Expressed at highest levels in brain and testis. Also expressed in heart, lung, liver, muscle, kidney and spleen.

Its subcellular location is the cytoplasm. It is found in the cytoskeleton. The protein resides in the microtubule organizing center. The protein localises to the centrosome. It localises to the cilium basal body. Its subcellular location is the cilium axoneme. It is found in the cell projection. The protein resides in the dendrite. The catalysed reaction is L-seryl-[protein] + ATP = O-phospho-L-seryl-[protein] + ADP + H(+). It catalyses the reaction L-threonyl-[protein] + ATP = O-phospho-L-threonyl-[protein] + ADP + H(+). Its activity is regulated as follows. Activated by phosphorylation on Thr-214. Its function is as follows. Serine/threonine-protein kinase. Phosphorylates the microtubule-associated protein MAPT/TAU. Also phosphorylates the microtubule-associated proteins MAP2 and MAP4. Involved in regulation of the microtubule network, causing reorganization of microtubules into bundles. Required for the initiation of axoneme extension during cilium assembly. Regulates the centrosomal location of ODF2 and phosphorylates ODF2 in vitro. Plays a role in cell cycle progression, specifically in the G1/S checkpoint. Reduces neuronal cell survival. Plays a role in energy homeostasis by regulating satiety and metabolic rate. Promotes adipogenesis by activating JNK1 and inhibiting the p38MAPK pathway, and triggers apoptosis by activating the JNK1 pathway. Phosphorylates mTORC1 complex member RPTOR and acts as a negative regulator of the mTORC1 complex, probably due to disruption of the interaction between phosphorylated RPTOR and the RRAGA/RRAGC heterodimer which is required for mTORC1 activation. Involved in NLRP3 positioning along microtubules by mediating NLRP3 recruitment to microtubule organizing center (MTOC) upon inflammasome activation. In Homo sapiens (Human), this protein is MAP/microtubule affinity-regulating kinase 4.